The primary structure comprises 96 residues: ATP-dependent Clp protease adapter protein ClpS (96 aa).

Belongs to the ClpS family. As to quaternary structure, binds to the N-terminal domain of the chaperone ClpA.

In terms of biological role, involved in the modulation of the specificity of the ClpAP-mediated ATP-dependent protein degradation. This chain is ATP-dependent Clp protease adapter protein ClpS, found in Campylobacter jejuni subsp. jejuni serotype O:2 (strain ATCC 700819 / NCTC 11168).